The primary structure comprises 262 residues: Protein crossbronx-like (262 aa).

One can recognise a UBC core domain in the interval 15 to 179 (RQGYQVLAEY…VQELALFTKK (165 aa)).

The protein belongs to the ubiquitin-conjugating enzyme family. FTS subfamily.

This chain is Protein crossbronx-like, found in Drosophila pseudoobscura pseudoobscura (Fruit fly).